Consider the following 337-residue polypeptide: Methionyl-tRNA formyltransferase (337 aa).

116 to 119 (SILP) contacts (6S)-5,6,7,8-tetrahydrofolate.

It belongs to the Fmt family.

It carries out the reaction L-methionyl-tRNA(fMet) + (6R)-10-formyltetrahydrofolate = N-formyl-L-methionyl-tRNA(fMet) + (6S)-5,6,7,8-tetrahydrofolate + H(+). Attaches a formyl group to the free amino group of methionyl-tRNA(fMet). The formyl group appears to play a dual role in the initiator identity of N-formylmethionyl-tRNA by promoting its recognition by IF2 and preventing the misappropriation of this tRNA by the elongation apparatus. The sequence is that of Methionyl-tRNA formyltransferase from Desulfovibrio desulfuricans (strain ATCC 27774 / DSM 6949 / MB).